A 957-amino-acid polypeptide reads, in one-letter code: Glycine dehydrogenase (decarboxylating) (957 aa).

The residue at position 708 (Lys-708) is an N6-(pyridoxal phosphate)lysine.

This sequence belongs to the GcvP family. As to quaternary structure, the glycine cleavage system is composed of four proteins: P, T, L and H. Requires pyridoxal 5'-phosphate as cofactor.

It carries out the reaction N(6)-[(R)-lipoyl]-L-lysyl-[glycine-cleavage complex H protein] + glycine + H(+) = N(6)-[(R)-S(8)-aminomethyldihydrolipoyl]-L-lysyl-[glycine-cleavage complex H protein] + CO2. Its function is as follows. The glycine cleavage system catalyzes the degradation of glycine. The P protein binds the alpha-amino group of glycine through its pyridoxal phosphate cofactor; CO(2) is released and the remaining methylamine moiety is then transferred to the lipoamide cofactor of the H protein. The polypeptide is Glycine dehydrogenase (decarboxylating) (Pectobacterium atrosepticum (strain SCRI 1043 / ATCC BAA-672) (Erwinia carotovora subsp. atroseptica)).